Consider the following 206-residue polypeptide: Guanylate kinase (206 aa).

The region spanning 5–183 (FNLLILSGPS…SKEIILSIAK (179 aa)) is the Guanylate kinase-like domain. 12–19 (GPSGAGKS) lines the ATP pocket.

The protein belongs to the guanylate kinase family.

Its subcellular location is the cytoplasm. It catalyses the reaction GMP + ATP = GDP + ADP. In terms of biological role, essential for recycling GMP and indirectly, cGMP. This Helicobacter pylori (strain J99 / ATCC 700824) (Campylobacter pylori J99) protein is Guanylate kinase (gmk).